A 128-amino-acid chain; its full sequence is Large ribosomal subunit protein bL17 (128 aa).

The protein belongs to the bacterial ribosomal protein bL17 family. As to quaternary structure, part of the 50S ribosomal subunit. Contacts protein L32.

The protein is Large ribosomal subunit protein bL17 of Erwinia tasmaniensis (strain DSM 17950 / CFBP 7177 / CIP 109463 / NCPPB 4357 / Et1/99).